Reading from the N-terminus, the 440-residue chain is UDP-N-acetylmuramoylalanine--D-glutamate ligase (440 aa).

115-121 (GSNGKST) is an ATP binding site.

Belongs to the MurCDEF family.

It localises to the cytoplasm. The catalysed reaction is UDP-N-acetyl-alpha-D-muramoyl-L-alanine + D-glutamate + ATP = UDP-N-acetyl-alpha-D-muramoyl-L-alanyl-D-glutamate + ADP + phosphate + H(+). Its pathway is cell wall biogenesis; peptidoglycan biosynthesis. Its function is as follows. Cell wall formation. Catalyzes the addition of glutamate to the nucleotide precursor UDP-N-acetylmuramoyl-L-alanine (UMA). This Aliivibrio fischeri (strain ATCC 700601 / ES114) (Vibrio fischeri) protein is UDP-N-acetylmuramoylalanine--D-glutamate ligase.